Here is a 263-residue protein sequence, read N- to C-terminus: Heat-labile enterotoxin IIB, A chain (263 aa).

Residues 1–20 (MAKVISFFISLFLISFPLYA) form the signal peptide. 26-39 (ADSRTPDEVRRSGG) contributes to the NAD(+) binding site. Glu-130 is an active-site residue. A disulfide bridge connects residues Cys-205 and Cys-217.

The protein belongs to the enterotoxin A family. Heterohexamer of one A chain and of five B chains.

In terms of biological role, the biological activity of the toxin is produced by the A chain, which activates intracellular adenyl cyclase. In Escherichia coli, this protein is Heat-labile enterotoxin IIB, A chain.